We begin with the raw amino-acid sequence, 660 residues long: Acyl-coenzyme A oxidase acox-1.3 (660 aa).

Residues 146–149, 154–155, and Gly-188 contribute to the FAD site; these read YAQT and GT. Substrate-binding positions include 282–285 and Arg-292; that span reads KIGY. Residues Arg-317 and 337-340 each bind FAD; that span reads QQHR. 4 residues coordinate ATP: His-339, Ser-389, His-393, and Gln-401. 430–431 lines the substrate pocket; the sequence is YE. Residue Glu-431 is the Proton acceptor of the active site. Position 433 (Glu-433) interacts with FAD. Residues 524–527 and Tyr-572 contribute to the ATP site; that span reads RASR. The Microbody targeting signal motif lies at 658–660; it reads AKL.

It belongs to the acyl-CoA oxidase family. In terms of assembly, forms a heterodimer with acox-1.1; the interaction may be important for the stability of acox-1.3. FAD is required as a cofactor.

It localises to the peroxisome. It catalyses the reaction asc-C7-CoA + O2 = asc-DeltaC7-CoA + H2O2. It participates in lipid metabolism; peroxisomal fatty acid beta-oxidation. With respect to regulation, activated by ATP. ATP binding leads to a conformational change that promotes FAD cofactor binding and enzyme activity. ATP binding likely occurs during acox-1.3 folding and/or dimer formation. Its function is as follows. Involved in the first step of peroxisomal beta-oxidation by catalyzing the desaturation of fatty acid-derived side chains of ascaroside pheromones, which regulates development and behavior. Specifically, shortens ascarosides with a 7-carbon side chain (asc-C7). Does not catalyze the desaturation of fatty acids or hydroxylated fatty acids. Involved in the biosynthesis of asc-C6-MK (daumone 2) and asc-delta-C9 (daumone 3) but not asc-C7 (daumone 1); daumones are pheromones produced during unfavourable growth conditions which promote entry into the dauer stage. The chain is Acyl-coenzyme A oxidase acox-1.3 from Caenorhabditis elegans.